An 86-amino-acid chain; its full sequence is Large ribosomal subunit protein bL31B (86 aa).

The protein belongs to the bacterial ribosomal protein bL31 family. Type B subfamily. In terms of assembly, part of the 50S ribosomal subunit.

The polypeptide is Large ribosomal subunit protein bL31B (Vibrio vulnificus (strain YJ016)).